Reading from the N-terminus, the 522-residue chain is Nuclear pore glycoprotein p62 (522 aa).

Ser2 carries the post-translational modification N-acetylserine. 5 tandem repeats follow at residues 6–7 (FG), 44–45 (FG), 76–77 (FG), 114–115 (FG), and 142–143 (FG). Residues 6–143 (FGGTGAPTGG…GTAPTGFVFG (138 aa)) form a 5 X 2 AA repeats of F-G region. Positions 169 to 179 (SGFNIGSAGNS) are enriched in polar residues. Disordered regions lie at residues 169-215 (SGFN…ATIT) and 260-288 (APGA…SSTT). 2 stretches are compositionally biased toward low complexity: residues 180-215 (AQPT…ATIT) and 262-288 (GAAS…SSTT). The required for centrosome localization stretch occupies residues 328-458 (MTYAQLESLI…QDLKDIIEHL (131 aa)). Residues 328–458 (MTYAQLESLI…QDLKDIIEHL (131 aa)) are a coiled coil. Thr373 carries an O-linked (GlcNAc) threonine glycan. Residues Ser408 and Ser418 each carry the phosphoserine modification. O-linked (GlcNAc) serine glycosylation occurs at Ser468.

Belongs to the nucleoporin NSP1/NUP62 family. Component of the p62 complex, a complex at least composed of NUP62, NUP54, and NUP58. Interacts with NUP88. Interacts with NUTF2. Interacts with HIKESHI. Interacts with OSBPL8. Interacts with CAPG. Interacts with SAS6 and TUBG1 at the centrosome. Interacts with MCM3AP isoform GANP. In terms of assembly, (Microbial infection) Interacts with Epstein-barr virus BGLF4; this interaction allows BGLF4 nuclear entry. In terms of processing, O-glycosylated. Contains about 10 N-acetylglucosamine side chain sites predicted for the entire protein, among which only one in the C-terminal. The inner channel of the NPC has a different redox environment from the cytoplasm and allows the formation of interchain disulfide bonds between some nucleoporins, the significant increase of these linkages upon oxidative stress reduces the permeability of the NPC.

It localises to the nucleus. Its subcellular location is the nuclear pore complex. It is found in the cytoplasm. The protein resides in the cytoskeleton. The protein localises to the spindle pole. It localises to the nucleus envelope. Its subcellular location is the microtubule organizing center. It is found in the centrosome. Its function is as follows. Essential component of the nuclear pore complex. The N-terminal is probably involved in nucleocytoplasmic transport. The C-terminal is involved in protein-protein interaction probably via coiled-coil formation, promotes its association with centrosomes and may function in anchorage of p62 to the pore complex. Plays a role in mitotic cell cycle progression by regulating centrosome segregation, centriole maturation and spindle orientation. It might be involved in protein recruitment to the centrosome after nuclear breakdown. This chain is Nuclear pore glycoprotein p62 (NUP62), found in Homo sapiens (Human).